Reading from the N-terminus, the 318-residue chain is Ribokinase (318 aa).

Substrate is bound by residues asparagine 12–aspartate 14, glycine 40–asparagine 44, and glutamate 141. Residues asparagine 188 and threonine 235–glycine 240 each bind ATP. The K(+) site is built by aspartate 264 and serine 266. Glycine 269 to aspartate 270 contributes to the ATP binding site. A substrate-binding site is contributed by aspartate 270. Aspartate 270 functions as the Proton acceptor in the catalytic mechanism. Residues serine 301, arginine 304, glycine 306, and serine 310 each coordinate K(+).

Belongs to the carbohydrate kinase PfkB family. Ribokinase subfamily. Homodimer. Mg(2+) serves as cofactor.

The protein localises to the cytoplasm. It is found in the nucleus. The enzyme catalyses D-ribose + ATP = D-ribose 5-phosphate + ADP + H(+). It participates in carbohydrate metabolism; D-ribose degradation; D-ribose 5-phosphate from beta-D-ribopyranose: step 2/2. Its activity is regulated as follows. Activated by a monovalent cation that binds near, but not in, the active site. The most likely occupant of the site in vivo is potassium. Ion binding induces a conformational change that may alter substrate affinity. Its function is as follows. Catalyzes the phosphorylation of ribose at O-5 in a reaction requiring ATP and magnesium. The resulting D-ribose-5-phosphate can then be used either for sythesis of nucleotides, histidine, and tryptophan, or as a component of the pentose phosphate pathway. The protein is Ribokinase (rbsk) of Dictyostelium discoideum (Social amoeba).